A 276-amino-acid chain; its full sequence is METLELQGAKLRYHQVGQRPVLIFIPGANGTGDIFLPLAEQLKDHFTVVAVDRRDYGESELTEPLPDSASNPDSDYRVKRDAQDIAELAKSLSDEPVYILGSSSGSIVAMHVLKDYPEVVKKIAFHEPPINTFLPDSTYWKDKNDDIVHQILTEGLEKGMKTFGETLNIAPIDAKMMSQPADTEKGRIEQYKRTMFWSEFEIRQYTHSDITLDDFTKYSDKITLLNGTDSRDSFPQDVNFYINKETGIPIVDIPGGHLGYIQKPEGFADVLLNMWG.

In terms of domain architecture, AB hydrolase-1 spans 20-137; that stretch reads PVLIFIPGAN…PPINTFLPDS (118 aa). Residues 57 to 76 form a disordered region; sequence GESELTEPLPDSASNPDSDY.

This sequence belongs to the AB hydrolase superfamily.

This is an uncharacterized protein from Staphylococcus aureus (strain bovine RF122 / ET3-1).